Consider the following 102-residue polypeptide: Virulence plasmid protein pGP4-D (102 aa).

The polypeptide is Virulence plasmid protein pGP4-D (Chlamydia trachomatis serovar L2 (strain ATCC VR-902B / DSM 19102 / 434/Bu)).